Consider the following 576-residue polypeptide: Periodic tryptophan protein 1 (576 aa).

The disordered stretch occupies residues 41–134 (AKATLEEAEG…LPNQEDSQEE (94 aa)). Composition is skewed to acidic residues over residues 46 to 58 (EEAE…EDDA) and 71 to 91 (DIDD…EIAD). S52 bears the Phosphoserine mark. Positions 108-120 (SDVKFHEGEKGED) are enriched in basic and acidic residues. S131 carries the post-translational modification Phosphoserine. WD repeat units lie at residues 207-252 (AFPL…KAFP), 284-324 (HHTD…AARS), 329-369 (HSNK…ESQM), 376-414 (MAGE…NRKP), 420-461 (AHDA…ATNT), and 472-514 (FDVG…SVRK). Residues 530–576 (EAQKIGKSSRIARKYTSNDNPDTVITIDDQGEDEEEREGGDEHDDMA) are disordered. Positions 558–576 (DQGEDEEEREGGDEHDDMA) are enriched in acidic residues.

It belongs to the WD repeat PWP1 family.

The sequence is that of Periodic tryptophan protein 1 (PWP1) from Saccharomyces cerevisiae (strain ATCC 204508 / S288c) (Baker's yeast).